The primary structure comprises 159 residues: Ribosomal RNA large subunit methyltransferase H (159 aa).

S-adenosyl-L-methionine-binding positions include L76, G107, and 126-131 (LSKLTM).

Belongs to the RNA methyltransferase RlmH family. Homodimer.

It localises to the cytoplasm. It carries out the reaction pseudouridine(1915) in 23S rRNA + S-adenosyl-L-methionine = N(3)-methylpseudouridine(1915) in 23S rRNA + S-adenosyl-L-homocysteine + H(+). Its function is as follows. Specifically methylates the pseudouridine at position 1915 (m3Psi1915) in 23S rRNA. The protein is Ribosomal RNA large subunit methyltransferase H of Acinetobacter baumannii (strain SDF).